Reading from the N-terminus, the 469-residue chain is MQMADAATIATMNKAAGGDKLAELFSLVPDLLEAANTSGNASLQLPDLWWELGLELPDGAPPGHPPGSGGAESADTEARVRILISVVYWVVCALGLAGNLLVLYLMKSMQGWRKSSINLFVTNLALTDFQFVLTLPFWAVENALDFKWPFGKAMCKIVSMVTSMNMYASVFFLTAMSVTRYHSVASALKSHRTRGHGRGDCCGRSLGDSCCFSAKALCVWIWALAALASLPSAIFSTTVKVMGEELCLVRFPDKLLGRDRQFWLGLYHSQKVLLGFVLPLGIIILCYLLLVRFIADRRAAGTKGGAAVAGGRPTGASARRLSKVTKSVTIVVLSFFLCWLPNQALTTWSILIKFNAVPFSQEYFLCQVYAFPVSVCLAHSNSCLNPVLYCLVRREFRKALKSLLWRIASPSITSMRPFTATTKPEHEDQGLQAPAPPHAAAEPDLLYYPPGVVVYSGGRYDLLPSSSAY.

Topologically, residues 1–81 (MQMADAATIA…ESADTEARVR (81 aa)) are extracellular. Residues Asn-36 and Asn-40 are each glycosylated (N-linked (GlcNAc...) asparagine). The helical transmembrane segment at 82–102 (ILISVVYWVVCALGLAGNLLV) threads the bilayer. Over 103-119 (LYLMKSMQGWRKSSINL) the chain is Cytoplasmic. Residues 120 to 140 (FVTNLALTDFQFVLTLPFWAV) traverse the membrane as a helical segment. Topologically, residues 141-156 (ENALDFKWPFGKAMCK) are extracellular. A disulfide bridge connects residues Cys-155 and Cys-247. The chain crosses the membrane as a helical span at residues 157–177 (IVSMVTSMNMYASVFFLTAMS). The Cytoplasmic portion of the chain corresponds to 178 to 215 (VTRYHSVASALKSHRTRGHGRGDCCGRSLGDSCCFSAK). Residues 216–236 (ALCVWIWALAALASLPSAIFS) traverse the membrane as a helical segment. Residues 237–270 (TTVKVMGEELCLVRFPDKLLGRDRQFWLGLYHSQ) are Extracellular-facing. The helical transmembrane segment at 271–291 (KVLLGFVLPLGIIILCYLLLV) threads the bilayer. The Cytoplasmic segment spans residues 292-329 (RFIADRRAAGTKGGAAVAGGRPTGASARRLSKVTKSVT). A helical transmembrane segment spans residues 330–350 (IVVLSFFLCWLPNQALTTWSI). The Extracellular segment spans residues 351–356 (LIKFNA). The chain crosses the membrane as a helical span at residues 357 to 377 (VPFSQEYFLCQVYAFPVSVCL). At 378–469 (AHSNSCLNPV…YDLLPSSSAY (92 aa)) the chain is on the cytoplasmic side.

Belongs to the G-protein coupled receptor 1 family. In terms of tissue distribution, expressed predominantly in brain regions. Highest expression in substantia nigra and pituitary, followed by hippocampus, spinal cord, amygdala, caudate nucleus and corpus callosum, quite low level in cerebellum. In peripheral tissues, relatively high levels in adrenal glands, low levels in pancreas, salivary gland, placenta, mammary gland and testis.

Its subcellular location is the cell membrane. Functionally, receptor for RNL3/relaxin-3. Binding of the ligand inhibit cAMP accumulation. In Homo sapiens (Human), this protein is Relaxin-3 receptor 1 (RXFP3).